The following is a 641-amino-acid chain: Sodium-dependent nutrient amino acid transporter 1 (641 aa).

The span at 1–21 (MELKNIEQQPQLQNGNGTATE) shows a compositional bias: polar residues. Positions 1–37 (MELKNIEQQPQLQNGNGTATENNEKGEQKPTEGGERT) are disordered. The Cytoplasmic portion of the chain corresponds to 1–38 (MELKNIEQQPQLQNGNGTATENNEKGEQKPTEGGERTN). Positions 22–35 (NNEKGEQKPTEGGE) are enriched in basic and acidic residues. Transmembrane regions (helical) follow at residues 39 to 59 (WGNG…LGNV), 72 to 92 (GAFL…MYYL), and 125 to 145 (TVCI…YLFV). 3 N-linked (GlcNAc...) asparagine glycosylation sites follow: asparagine 181, asparagine 190, and asparagine 198. 9 helical membrane-spanning segments follow: residues 229 to 249 (PDWK…LVIM), 258 to 278 (AAYF…GRAV), 307 to 327 (AVVQ…MFAS), 341 to 361 (IVTT…FAIL), 401 to 421 (LFSV…IVAL), 441 to 461 (VALV…TPGG), 474 to 494 (TYVV…IYGL), 516 to 536 (CWSF…MATI), and 552 to 572 (IAGW…GIWY).

This sequence belongs to the sodium:neurotransmitter symporter (SNF) (TC 2.A.22) family.

It is found in the membrane. Its function is as follows. Unusual broad substrate spectrum amino acid:sodium cotransporter that promotes absorption of the D isomers of essential amino acids. Neutral amino acids are the preferred substrates, especially methionine and phenylalanine. This chain is Sodium-dependent nutrient amino acid transporter 1, found in Drosophila willistoni (Fruit fly).